The chain runs to 477 residues: Secreted RxLR effector protein 102 (477 aa).

Positions 1-20 are cleaved as a signal peptide; it reads MRGGYYVLTALFVVASSEIA. Residues 48–65 carry the RxLR-dEER motif; it reads RFLRESRGVHGNVANEER. Disordered regions lie at residues 326 to 345, 351 to 370, 376 to 401, and 433 to 455; these read SKGQ…TSKG, IKRS…LPSI, SSKS…KRSR, and PRSA…APSS.

This sequence belongs to the RxLR effector family.

Its subcellular location is the secreted. It is found in the host nucleus. In terms of biological role, secreted effector that acts as an elicitor that induces cell death in host plant cells. The polypeptide is Secreted RxLR effector protein 102 (Plasmopara viticola (Downy mildew of grapevine)).